Consider the following 327-residue polypeptide: AA9 family lytic polysaccharide monooxygenase G (327 aa).

A signal peptide spans 1 to 20 (MKLNLASLCFLASIAPLVSG). Positions 21 and 96 each coordinate Cu(2+). C62 and C185 form a disulfide bridge. H172 is an O2 binding site. Cu(2+) is bound at residue Y182. A glycan (N-linked (GlcNAc...) asparagine) is linked at N290. A CBM1 domain is found at 291–327 (GTIKKYYQCGGQGWTGSGSCEAGTSCREWNTWYFQCV).

Belongs to the polysaccharide monooxygenase AA9 family. Cu(2+) is required as a cofactor.

Its subcellular location is the secreted. It carries out the reaction [(1-&gt;4)-beta-D-glucosyl]n+m + reduced acceptor + O2 = 4-dehydro-beta-D-glucosyl-[(1-&gt;4)-beta-D-glucosyl]n-1 + [(1-&gt;4)-beta-D-glucosyl]m + acceptor + H2O.. In terms of biological role, lytic polysaccharide monooxygenase (LPMO) that depolymerizes crystalline and amorphous polysaccharides via the oxidation of scissile alpha- or beta-(1-4)-glycosidic bonds, yielding C1 or C4 oxidation products. Catalysis by LPMOs requires the reduction of the active-site copper from Cu(II) to Cu(I) by a reducing agent and H(2)O(2) or O(2) as a cosubstrate. This is AA9 family lytic polysaccharide monooxygenase G from Aspergillus tamarii.